The chain runs to 503 residues: Probable cytosol aminopeptidase (503 aa).

Mn(2+) is bound by residues Lys270 and Asp275. Residue Lys282 is part of the active site. Mn(2+) is bound by residues Asp293, Asp352, and Glu354. Arg356 is an active-site residue.

Belongs to the peptidase M17 family. Mn(2+) serves as cofactor.

The protein resides in the cytoplasm. The enzyme catalyses Release of an N-terminal amino acid, Xaa-|-Yaa-, in which Xaa is preferably Leu, but may be other amino acids including Pro although not Arg or Lys, and Yaa may be Pro. Amino acid amides and methyl esters are also readily hydrolyzed, but rates on arylamides are exceedingly low.. It carries out the reaction Release of an N-terminal amino acid, preferentially leucine, but not glutamic or aspartic acids.. Presumably involved in the processing and regular turnover of intracellular proteins. Catalyzes the removal of unsubstituted N-terminal amino acids from various peptides. This Sodalis glossinidius (strain morsitans) protein is Probable cytosol aminopeptidase.